A 784-amino-acid chain; its full sequence is MTKKLALKRRGKDSEPTNEVVASSEASENEEEEEDLLQAVKDPGEDSTDDEGIDQEYHSDSSEELQFESDEEGNYLGRKQSSSAEEDEESSDEEDNEEEGSTDEEEVEDEEKVSKSKQSDDKPSGSGAASKKALTAELPKRDSSKPEYQDSDTSDEEDIRNTVGNIPMHWYDEYKHIGYDWDAKKIIKPPQGDQIDEFLRKIEDPDFWRTVKDPLTGQDVRLTDEDIALIKRIVSGRIPNKDHEEYEPWIEWFTSEVEKMPIKNVPDHKRSFLPSVSEKKRVSRMVHALKMGWMKTTEEVEREKQAKRGPKFYMLWETDTSREHMRRIHDPVSAPKRDLPGHAESYNPPPEYLFDAKETKEWLKLKDEPHKRKLHFMPQKFKSLREVPAYSRYLRERFLRCLDLYLCPRAKRVKLNIDAEYLIPKLPSPRDLQPFPTVESMVYRGHTDLVRSVSVEPKGEYLVSGSDDKTVKIWEIATGRCIRTIETDEVVRCVAWCPNPKLSIIAVATGNRLLLVNPKVGDKVLVQKTDDLLAEAPSQDVIESERIKTAVQWSNAEADEQEKGVRVVITHFKPIRQVTWHGRGDYLATVMPEGANRSALIHQLSKRRSQIPFSKSKGLIQFVLFHPVKPCFFVATQHNIRIYDLVKQELVKKLLTNSKWISGMSIHPKGDNLLVSTYDKKMLWFDLDLSTKPYQTMRLHRNAVRSVAFHRRYPLFASGSDDQAVIVSHGMVYNDLLQNPLIVPLKKLQTHEKRDEFGVLDVNWHPVQPWVFSTGADSTIRLYT.

A compositionally biased stretch (basic residues) spans 1–11 (MTKKLALKRRG). The tract at residues 1–159 (MTKKLALKRR…DSDTSDEEDI (159 aa)) is disordered. 4 stretches are compositionally biased toward acidic residues: residues 27 to 36 (SENEEEEEDL), 45 to 54 (EDSTDDEGID), 62 to 73 (SEELQFESDEEG), and 84 to 111 (AEED…EDEE). Composition is skewed to basic and acidic residues over residues 112–123 (KVSKSKQSDDKP) and 138–148 (LPKRDSSKPEY). Residues 149-158 (QDSDTSDEED) are compositionally biased toward acidic residues. WD repeat units follow at residues 445–486 (GHTD…RTIE), 488–526 (DEVV…KVLV), 570–612 (THFK…SQIP), 615–653 (KSKG…LVKK), 656–695 (TNSK…KPYQ), 699–738 (LHRN…DLLQ), and 754–784 (RDEF…RLYT).

The protein belongs to the WD repeat BOP1/ERB1 family.

The protein localises to the nucleus. It is found in the nucleolus. The protein resides in the nucleoplasm. In terms of biological role, required for maturation of ribosomal RNAs and formation of the large ribosomal subunit. The sequence is that of Ribosome biogenesis protein BOP1 homolog from Drosophila sechellia (Fruit fly).